Reading from the N-terminus, the 172-residue chain is Myosin regulatory light chain 12B (172 aa).

Positions 1-16 (MSSKKAKTKTTKKRPQ) are enriched in basic residues. The segment at 1 to 20 (MSSKKAKTKTTKKRPQRATS) is disordered. Position 19 is a phosphothreonine; by MLCK and ZIPK/DAPK3 (threonine 19). At serine 20 the chain carries Phosphoserine; by MLCK and ZIPK/DAPK3. EF-hand domains follow at residues 29 to 64 (SQIQ…LGKN), 98 to 133 (DPED…MGDR), and 134 to 169 (FTDE…GAKD). Aspartate 42, asparagine 44, aspartate 46, and aspartate 53 together coordinate Ca(2+).

In terms of assembly, myosin is a hexamer of 2 heavy chains and 4 light chains: interacts with myosin heavy chain MYO19. In terms of processing, phosphorylation increases the actin-activated myosin ATPase activity and thereby regulates the contractile activity. It is required to generate the driving force in the migration of the cells but not necessary for localization of myosin-2 at the leading edge. Phosphorylation is reduced following epigallocatechin-3-O-gallate treatment. Ubiquitously expressed in various hematopoietic cells.

In terms of biological role, myosin regulatory subunit that plays an important role in regulation of both smooth muscle and nonmuscle cell contractile activity via its phosphorylation. Phosphorylation triggers actin polymerization in vascular smooth muscle. Implicated in cytokinesis, receptor capping, and cell locomotion. The polypeptide is Myosin regulatory light chain 12B (MYL12B) (Homo sapiens (Human)).